We begin with the raw amino-acid sequence, 193 residues long: Immunogenic protein MPB70 (193 aa).

The signal sequence occupies residues 1–30; the sequence is MKVKNTIAATSFAAAGLAALAVAVSPPAAA. The 133-residue stretch at 57–189 folds into the FAS1 domain; the sequence is QDPVAVAASN…ATVYMIDSVL (133 aa).

Generally found as a monomer; homodimer in culture fluids.

Its subcellular location is the secreted. In Mycobacterium bovis (strain ATCC BAA-935 / AF2122/97), this protein is Immunogenic protein MPB70 (mpb70).